The primary structure comprises 376 residues: MFQLSVQDIHPGEKAGDKEEAIRQVAAALVQAGNVAEGYVNGMLAREQQTSTFLGNGIAIPHGTTDTRDQVLKTGVQVFQFPEGVTWGDGQVAYVAIGIAASSDEHLGLLRQLTHVLSDDSVAEQLKSATTAEELRALLMGEKQSEQLKLDNEMLTLDIVASDLLTLQALNAARLKEAGAVDATFVTKAINEQPLNLGQGIWLSDSAEGNLRSAIAVSRAANAFDVDGETAAMLVSVAMNDDQPIAVLKRLADLLLDNKADRLLKADAATLLALLTSDDAPTDDVLSAEFVVRNEHGLHARPGTMLVNTIKQFNSDITVTNLDGTGKPANGRSLMKVVALGVKKGHRLRFTAQGADAEQALKAIGDAIAAGLGEGA.

In terms of domain architecture, PTS EIIA type-2 spans 2 to 142 (FQLSVQDIHP…EELRALLMGE (141 aa)). His62 serves as the catalytic Tele-phosphohistidine intermediate; for EIIA activity. His62 carries the post-translational modification Phosphohistidine; by HPr. A m domain region spans residues 156–284 (TLDIVASDLL…LTSDDAPTDD (129 aa)). An HPr domain is found at 285-375 (VLSAEFVVRN…DAIAAGLGEG (91 aa)). Catalysis depends on His299, which acts as the Pros-phosphohistidine intermediate; for HPr activity. Phosphohistidine; by EI is present on His299.

It is found in the cytoplasm. Its function is as follows. The phosphoenolpyruvate-dependent sugar phosphotransferase system (sugar PTS), a major carbohydrate active transport system, catalyzes the phosphorylation of incoming sugar substrates concomitantly with their translocation across the cell membrane. The enzyme II FruAB PTS system is involved in fructose transport. This chain is Multiphosphoryl transfer protein, found in Escherichia coli O157:H7.